We begin with the raw amino-acid sequence, 505 residues long: 4-alpha-glucanotransferase (505 aa).

It belongs to the disproportionating enzyme family.

The protein resides in the cytoplasm. The catalysed reaction is Transfers a segment of a (1-&gt;4)-alpha-D-glucan to a new position in an acceptor, which may be glucose or a (1-&gt;4)-alpha-D-glucan.. This Synechocystis sp. (strain ATCC 27184 / PCC 6803 / Kazusa) protein is 4-alpha-glucanotransferase (malQ).